The primary structure comprises 338 residues: Ketol-acid reductoisomerase (NADP(+)) (338 aa).

The region spanning 1 to 181 (MNIYYDKDCD…GGGRAGIIET (181 aa)) is the KARI N-terminal Rossmann domain. NADP(+)-binding positions include 24-27 (YGSQ), arginine 47, serine 50, serine 52, and 82-85 (DEHQ). The active site involves histidine 107. Residue glycine 133 coordinates NADP(+). Residues 182-327 (AFREETETDL…ERLRSMMPWI (146 aa)) form the KARI C-terminal knotted domain. 4 residues coordinate Mg(2+): aspartate 190, glutamate 194, glutamate 226, and glutamate 230. Serine 251 contacts substrate.

The protein belongs to the ketol-acid reductoisomerase family. It depends on Mg(2+) as a cofactor.

It catalyses the reaction (2R)-2,3-dihydroxy-3-methylbutanoate + NADP(+) = (2S)-2-acetolactate + NADPH + H(+). The enzyme catalyses (2R,3R)-2,3-dihydroxy-3-methylpentanoate + NADP(+) = (S)-2-ethyl-2-hydroxy-3-oxobutanoate + NADPH + H(+). It functions in the pathway amino-acid biosynthesis; L-isoleucine biosynthesis; L-isoleucine from 2-oxobutanoate: step 2/4. Its pathway is amino-acid biosynthesis; L-valine biosynthesis; L-valine from pyruvate: step 2/4. In terms of biological role, involved in the biosynthesis of branched-chain amino acids (BCAA). Catalyzes an alkyl-migration followed by a ketol-acid reduction of (S)-2-acetolactate (S2AL) to yield (R)-2,3-dihydroxy-isovalerate. In the isomerase reaction, S2AL is rearranged via a Mg-dependent methyl migration to produce 3-hydroxy-3-methyl-2-ketobutyrate (HMKB). In the reductase reaction, this 2-ketoacid undergoes a metal-dependent reduction by NADPH to yield (R)-2,3-dihydroxy-isovalerate. This chain is Ketol-acid reductoisomerase (NADP(+)), found in Nitrosococcus oceani (strain ATCC 19707 / BCRC 17464 / JCM 30415 / NCIMB 11848 / C-107).